A 264-amino-acid chain; its full sequence is Formamidopyrimidine-DNA glycosylase (264 aa).

Proline 2 acts as the Schiff-base intermediate with DNA in catalysis. Glutamate 3 functions as the Proton donor in the catalytic mechanism. Lysine 58 (proton donor; for beta-elimination activity) is an active-site residue. Residues histidine 89, arginine 107, and arginine 144 each contribute to the DNA site. An FPG-type zinc finger spans residues 229–263; sequence RVYQRTGEPCLNCKTPIRRVIVTQRSSHFCPHCQK. The active-site Proton donor; for delta-elimination activity is the arginine 253.

The protein belongs to the FPG family. As to quaternary structure, monomer. The cofactor is Zn(2+).

The catalysed reaction is Hydrolysis of DNA containing ring-opened 7-methylguanine residues, releasing 2,6-diamino-4-hydroxy-5-(N-methyl)formamidopyrimidine.. It catalyses the reaction 2'-deoxyribonucleotide-(2'-deoxyribose 5'-phosphate)-2'-deoxyribonucleotide-DNA = a 3'-end 2'-deoxyribonucleotide-(2,3-dehydro-2,3-deoxyribose 5'-phosphate)-DNA + a 5'-end 5'-phospho-2'-deoxyribonucleoside-DNA + H(+). Functionally, involved in base excision repair of DNA damaged by oxidation or by mutagenic agents. Acts as a DNA glycosylase that recognizes and removes damaged bases. Has a preference for oxidized purines, such as 7,8-dihydro-8-oxoguanine (8-oxoG). Has AP (apurinic/apyrimidinic) lyase activity and introduces nicks in the DNA strand. Cleaves the DNA backbone by beta-delta elimination to generate a single-strand break at the site of the removed base with both 3'- and 5'-phosphates. This Solibacter usitatus (strain Ellin6076) protein is Formamidopyrimidine-DNA glycosylase.